The sequence spans 92 residues: Sec-independent protein translocase protein TatA (92 aa).

A helical membrane pass occupies residues 1–21 (MGIFDWKHWIVILVVVVLVFG). A disordered region spans residues 43–92 (MNDDEKPADPTVTPAQPVPPVQPQATAQANPPHTIDVQAQKVEEPIRKDV). Positions 65-74 (PQATAQANPP) are enriched in low complexity. A compositionally biased stretch (basic and acidic residues) spans 83–92 (KVEEPIRKDV).

Belongs to the TatA/E family. As to quaternary structure, the Tat system comprises two distinct complexes: a TatABC complex, containing multiple copies of TatA, TatB and TatC subunits, and a separate TatA complex, containing only TatA subunits. Substrates initially bind to the TatABC complex, which probably triggers association of the separate TatA complex to form the active translocon.

It localises to the cell inner membrane. Part of the twin-arginine translocation (Tat) system that transports large folded proteins containing a characteristic twin-arginine motif in their signal peptide across membranes. TatA could form the protein-conducting channel of the Tat system. In Pseudomonas fluorescens (strain Pf0-1), this protein is Sec-independent protein translocase protein TatA.